The chain runs to 147 residues: Delta-latroinsectotoxin-Lhe1a (147 aa).

ANK repeat units follow at residues 57–59 (VSI), 66–78 (NNWT…IYFK), 79–96 (KNPA…DIEA), and 98–125 (TSIM…TLDE).

Belongs to the cationic peptide 01 (latrotoxin) family. 04 (delta-latroinsectotoxin) subfamily. In terms of assembly, homotetramer in membrane. Expressed by the venom gland.

It localises to the secreted. The protein localises to the target cell membrane. Functionally, insecticidal presynaptic neurotoxin that induces massive neurotransmitter release at insect (but not vertebrate) neuromuscular junctions. Native toxin forms cation-permeable pores (with high permeability to calcium) in lipid membranes locust muscle membrane and artificial lipid bilayers. May bind to insect neurexin-1 homolog, insect adhesion G protein-coupled receptor L1 homolog, and insect receptor-type tyrosine-protein phosphatase S homolog, and induces neurotransmitter exocytosis both by forming tetrameric pores in membranes and signaling via G protein-coupled receptor. Oligomerization is a process independent of divalent cations. In Latrodectus hesperus (Western black widow spider), this protein is Delta-latroinsectotoxin-Lhe1a.